Reading from the N-terminus, the 625-residue chain is Coagulation factor XI (625 aa).

The N-terminal stretch at 1 to 18 (MIFLYQVVHFILFTSVSG) is a signal peptide. Apple domains follow at residues 20-103 (CVTQ…FKQC), 110-193 (CNKD…LKSC), 200-283 (CIRD…LQSC), and 291-374 (CHSS…LRLC). Cystine bridges form between cysteine 20/cysteine 103, cysteine 46/cysteine 76, cysteine 50/cysteine 56, cysteine 110/cysteine 193, cysteine 136/cysteine 165, cysteine 140/cysteine 146, cysteine 200/cysteine 283, cysteine 226/cysteine 255, cysteine 230/cysteine 236, cysteine 291/cysteine 374, cysteine 317/cysteine 346, cysteine 321/cysteine 327, cysteine 380/cysteine 500, cysteine 416/cysteine 432, cysteine 514/cysteine 581, cysteine 545/cysteine 560, and cysteine 571/cysteine 599. 2 N-linked (GlcNAc...) (complex) asparagine glycosylation sites follow: asparagine 90 and asparagine 126. The N-linked (GlcNAc...) (complex) asparagine; atypical glycan is linked to asparagine 163. A Peptidase S1 domain is found at 388–623 (IVGGTASVRG…YVDWILEKTQ (236 aa)). Catalysis depends on histidine 431, which acts as the Charge relay system. N-linked (GlcNAc...) (complex) asparagine glycosylation is present at asparagine 450. Catalysis depends on aspartate 480, which acts as the Charge relay system. An N-linked (GlcNAc...) (complex) asparagine glycan is attached at asparagine 491. 547-550 (KRYR) provides a ligand contact to heparin. Catalysis depends on serine 575, which acts as the Charge relay system.

This sequence belongs to the peptidase S1 family. Plasma kallikrein subfamily. Homodimer; disulfide-linked. Can form non-covalently bonded homodimers. After activation the heavy and light chains are also linked by a disulfide bond. Interacts (activated) with F9 (inactive and activated) in calcium-dependent manner. Forms a heterodimer with SERPINA5. Interacts with Anopheles gambiae D7L2. Interacts (activated) with guianensin, an anticoagulant protein from Simulium guianense saliva. In terms of processing, N-glycosylated on both chains. N-glycosylated sites mainly consist of nonfucosylated sialylated biantennary (in high abundance) and/or triantennary (in low abundance) complex structures. Glycosylation at Asn-163 uses a rare non-canonical Asn-X-Cys glycosite. Post-translationally, activated by factor XIIa (or XII), which cleaves each polypeptide after Arg-387 into the light chain, which contains the active site, and the heavy chain, which associates with high molecular weight (HMW) kininogen. Activated by F12 (activated); the presence of negatively charged surfaces accelerates activation. Activated by F2 (thrombin); the presence of negatively charged surfaces, such as polyphosphate and dextran sulfate, strongly accelerates activation. Autoactivated; the presence of negatively charged surfaces, such as polyphosphate and dextran sulfate, accelerates autoactivation and autolysis. Isoform 2 is produced by platelets and megakaryocytes but absent from other blood cells.

It is found in the secreted. The enzyme catalyses Selective cleavage of Arg-|-Ala and Arg-|-Val bonds in factor IX to form factor IXa.. Its activity is regulated as follows. Inhibited by SERPINA5. In terms of biological role, factor XI triggers the middle phase of the intrinsic pathway of blood coagulation by activating factor IX. This Homo sapiens (Human) protein is Coagulation factor XI (F11).